A 182-amino-acid chain; its full sequence is Plasmolipin (182 aa).

Residues 1 to 20 (MAEFPSKVNTRTSSPAQGGG) form a disordered region. The Cytoplasmic portion of the chain corresponds to 1–35 (MAEFPSKVNTRTSSPAQGGGAVVSTLSPDLGFVRS). Residues 7–16 (KVNTRTSSPA) are compositionally biased toward polar residues. The 135-residue stretch at 32-166 (FVRSSLGALM…SAFLSFQAWR (135 aa)) folds into the MARVEL domain. The chain crosses the membrane as a helical span at residues 36–56 (SLGALMLLQLVLGLLVWALIA). Residues 57–68 (DTPYHLYPSYGW) are Extracellular-facing. The helical transmembrane segment at 69–89 (VMFVAVFLWLVTIIFFVLYLF) threads the bilayer. Residues 90–99 (QLHMKLYMVP) lie on the Cytoplasmic side of the membrane. A helical transmembrane segment spans residues 100-120 (WPLVLMVFNVGATVLYITAFI). The Extracellular segment spans residues 121–141 (TCSASVELTSLKGSQPYNQRA). A helical membrane pass occupies residues 142 to 162 (AASFFSCLVMIAYGVSAFLSF). Residues 163–182 (QAWRGVGSNAATSQMAGGYA) are Cytoplasmic-facing.

The protein belongs to the MAL family. Forms oligomers. In terms of processing, phosphorylated.

The protein localises to the cell membrane. Its subcellular location is the myelin membrane. The protein resides in the apical cell membrane. Main component of the myelin sheath that plays an important role in myelin membrane biogenesis and myelination. Plays an essential function in apical endocytosis. Regulates epithelial development through the regulation of apical endocytosis. Part of the intracellular machinery that mediates basolateral-to-apical transport of ICAM-1, an essential adhesion receptor in epithelial cells, from the subapical compartment in hepatic epithelial cells. The protein is Plasmolipin (PLLP) of Bos taurus (Bovine).